The following is a 72-amino-acid chain: MAQHSKYSDAQLSAIVNDMIAVLEKHKAPVDLSLIALGNMASNLLTTSVPQTQCEALAQAFSNSLINAVKTR.

Belongs to the UPF0352 family.

This Haemophilus influenzae (strain ATCC 51907 / DSM 11121 / KW20 / Rd) protein is UPF0352 protein HI_0840.